An 852-amino-acid chain; its full sequence is Disks large homolog 2 (852 aa).

Residues cysteine 5 and cysteine 7 are each lipidated (S-palmitoyl cysteine). The residue at position 28 (serine 28) is a Phosphoserine. Position 58 is a phosphotyrosine (tyrosine 58). Serine 65 bears the Phosphoserine mark. PDZ domains are found at residues 98–184 (EITL…VRRR) and 193–279 (EIKL…VGKP). A phosphoserine mark is found at serine 307, serine 328, serine 360, serine 365, serine 406, and serine 414. The PDZ 3 domain occupies 421 to 501 (KVVLHKGSTG…QTVTIIAQYQ (81 aa)). A Phosphotyrosine modification is found at tyrosine 505. Phosphoserine is present on residues serine 528, serine 530, and serine 553. An SH3 domain is found at 536–606 (KRSLYVRAMF…PSKRRVERKE (71 aa)). A Guanylate kinase-like domain is found at 662 to 837 (TRPVIILGPM…IYNQCKLVIE (176 aa)). 2 positions are modified to phosphotyrosine: tyrosine 732 and tyrosine 737.

The protein belongs to the MAGUK family. Interacts through its PDZ domains with NETO1. Interacts with NOS1/nNOS through second PDZ domain. Interacts with KCNJ2/Kir2.1 (via C-terminus) through one of its PDZ domains. Interacts with KCNJ4. Interacts with FRMPD4 (via C-terminus). Interacts with LRFN1. Interacts with LRFN2 and LRFN4. Interacts with FASLG. Interacts with ADAM22. Interacts with DGKI (via PDZ-binding motif). Palmitoylation of isoform 1 and isoform 2 is not required for targeting to postsynaptic density. As to expression, detected in juxtaparanodal zones in the central nervous system and at nerve terminal plexuses of basket cells in the cerebellum (at protein level). Brain. High levels in cerebellar Purkinje cells. Expressed in pyramidal cells of the Ammons's horn and granular cells of the dentate gyrus in the hippocampus as well as cerebral cortex and striatum. High levels in dorsal horn of spinal cord.

The protein localises to the cell membrane. Its subcellular location is the postsynaptic density. The protein resides in the synapse. It is found in the cell projection. It localises to the axon. The protein localises to the membrane. Its subcellular location is the perikaryon. Functionally, required for perception of chronic pain through NMDA receptor signaling. Regulates surface expression of NMDA receptors in dorsal horn neurons of the spinal cord. Interacts with the cytoplasmic tail of NMDA receptor subunits as well as inward rectifying potassium channels. Involved in regulation of synaptic stability at cholinergic synapses. Part of the postsynaptic protein scaffold of excitatory synapses. The protein is Disks large homolog 2 (Dlg2) of Rattus norvegicus (Rat).